Reading from the N-terminus, the 139-residue chain is Ribonuclease P/MRP protein subunit POP5 (139 aa).

This sequence belongs to the eukaryotic/archaeal RNase P protein component 2 family.

It is found in the nucleus. The catalysed reaction is Endonucleolytic cleavage of RNA, removing 5'-extranucleotides from tRNA precursor.. In terms of biological role, component of ribonuclease P, a protein complex that generates mature tRNA molecules by cleaving their 5'-ends. Also a component of RNase MRP, which cleaves pre-rRNA sequences. The polypeptide is Ribonuclease P/MRP protein subunit POP5 (Schizosaccharomyces pombe (strain 972 / ATCC 24843) (Fission yeast)).